We begin with the raw amino-acid sequence, 142 residues long: Ribosome maturation factor RimP (142 aa).

It belongs to the RimP family.

It is found in the cytoplasm. In terms of biological role, required for maturation of 30S ribosomal subunits. This is Ribosome maturation factor RimP from Wolinella succinogenes (strain ATCC 29543 / DSM 1740 / CCUG 13145 / JCM 31913 / LMG 7466 / NCTC 11488 / FDC 602W) (Vibrio succinogenes).